We begin with the raw amino-acid sequence, 339 residues long: Protein H339R (339 aa).

It belongs to the asfivirus H339R family. Interacts with host NACA (alpha chain of nascent polypeptide-associated complex).

The protein resides in the host cytoplasm. It localises to the host nucleus. The chain is Protein H339R from African swine fever virus (isolate Tick/Malawi/Lil 20-1/1983) (ASFV).